We begin with the raw amino-acid sequence, 145 residues long: D-aminoacyl-tRNA deacylase (145 aa).

The Gly-cisPro motif, important for rejection of L-amino acids motif lies at 137–138 (GP).

The protein belongs to the DTD family. As to quaternary structure, homodimer.

The protein resides in the cytoplasm. The catalysed reaction is glycyl-tRNA(Ala) + H2O = tRNA(Ala) + glycine + H(+). The enzyme catalyses a D-aminoacyl-tRNA + H2O = a tRNA + a D-alpha-amino acid + H(+). In terms of biological role, an aminoacyl-tRNA editing enzyme that deacylates mischarged D-aminoacyl-tRNAs. Also deacylates mischarged glycyl-tRNA(Ala), protecting cells against glycine mischarging by AlaRS. Acts via tRNA-based rather than protein-based catalysis; rejects L-amino acids rather than detecting D-amino acids in the active site. By recycling D-aminoacyl-tRNA to D-amino acids and free tRNA molecules, this enzyme counteracts the toxicity associated with the formation of D-aminoacyl-tRNA entities in vivo and helps enforce protein L-homochirality. The sequence is that of D-aminoacyl-tRNA deacylase from Pseudomonas putida (strain W619).